The chain runs to 357 residues: tRNA-specific 2-thiouridylase MnmA (357 aa).

Residues 10 to 17 (GISGGVDS) and isoleucine 36 each bind ATP. Residue cysteine 98 is the Nucleophile of the active site. An intrachain disulfide couples cysteine 98 to cysteine 194. Glycine 122 contributes to the ATP binding site. Positions 144–146 (KDQ) are interaction with tRNA. Catalysis depends on cysteine 194, which acts as the Cysteine persulfide intermediate. Residues 303–304 (RY) form an interaction with tRNA region.

Belongs to the MnmA/TRMU family.

It is found in the cytoplasm. The catalysed reaction is S-sulfanyl-L-cysteinyl-[protein] + uridine(34) in tRNA + AH2 + ATP = 2-thiouridine(34) in tRNA + L-cysteinyl-[protein] + A + AMP + diphosphate + H(+). Catalyzes the 2-thiolation of uridine at the wobble position (U34) of tRNA, leading to the formation of s(2)U34. The chain is tRNA-specific 2-thiouridylase MnmA from Chlorobium phaeovibrioides (strain DSM 265 / 1930) (Prosthecochloris vibrioformis (strain DSM 265)).